The sequence spans 291 residues: Protease HtpX (291 aa).

Transmembrane regions (helical) follow at residues 4-24 (IILF…ILSF) and 32-52 (ISGL…ISLL). A Zn(2+)-binding site is contributed by His139. Glu140 is an active-site residue. His143 contributes to the Zn(2+) binding site. 2 helical membrane-spanning segments follow: residues 158–178 (IVNT…SSIL) and 192–212 (WVYI…ASII). Glu221 is a binding site for Zn(2+).

Belongs to the peptidase M48B family. Zn(2+) serves as cofactor.

It localises to the cell membrane. This chain is Protease HtpX, found in Buchnera aphidicola subsp. Baizongia pistaciae (strain Bp).